The sequence spans 156 residues: Small ribosomal subunit protein uS7 (156 aa).

This sequence belongs to the universal ribosomal protein uS7 family. As to quaternary structure, part of the 30S ribosomal subunit. Contacts proteins S9 and S11.

One of the primary rRNA binding proteins, it binds directly to 16S rRNA where it nucleates assembly of the head domain of the 30S subunit. Is located at the subunit interface close to the decoding center, probably blocks exit of the E-site tRNA. The chain is Small ribosomal subunit protein uS7 from Pseudoalteromonas translucida (strain TAC 125).